The following is a 447-amino-acid chain: MLKFIFMLMFMFPLSFLKNFYWTVQNLIFLLTFMFMINLSSLNYFNYISYYFGLDMVSYGLILLSFWICGLMLMASEKVFSTNNYEKLFVFMILFLLFMLVLTFSSMSVFMFYLFFEASLIPTLFLILGWGYQPERLQAGVYLLFYTLLASLPLLIGIFYILNSKNTLSFTLLLNYSFSNFNLLYLSLVFAFLVKMPMFLVHLWLPKAHVEAPVSGSMILAGILLKLGGYGLLRMFSLLQISGVKYNYWWISISLVGGVLISLVCLRQTDLKALIAYSSVAHMGIVLSGLLTMTYWGLTGSYALMIAHGLCSSGLFCLANISYERMGSRSLLINKGLLNFMPTLSLWWFLLCSGNMAAPPTLNLLGEISLLNSIVSWSWITMIMLSFLSFFSAAYSLYLFAYSQHGKIYSGVYFFSVGTTREFLLLMLHWLPLNLLILKSNFCMLWI.

Helical transmembrane passes span 28 to 48 (IFLL…FNYI), 56 to 76 (MVSY…LMAS), 89 to 109 (FVFM…SMSV), 110 to 130 (FMFY…ILGW), 141 to 161 (VYLL…IFYI), 183 to 203 (LLYL…LVHL), 213 to 233 (PVSG…YGLL), 246 to 266 (YNYW…LVCL), 273 to 293 (ALIA…LLTM), 298 to 318 (LTGS…LFCL), 331 to 351 (LLIN…WFLL), 374 to 394 (IVSW…FSAA), and 409 to 431 (YSGV…LHWL).

The protein belongs to the complex I subunit 4 family.

The protein localises to the mitochondrion membrane. It catalyses the reaction a ubiquinone + NADH + 5 H(+)(in) = a ubiquinol + NAD(+) + 4 H(+)(out). Its function is as follows. Core subunit of the mitochondrial membrane respiratory chain NADH dehydrogenase (Complex I) that is believed to belong to the minimal assembly required for catalysis. Complex I functions in the transfer of electrons from NADH to the respiratory chain. The immediate electron acceptor for the enzyme is believed to be ubiquinone. The chain is NADH-ubiquinone oxidoreductase chain 4 (mt:ND4) from Anopheles gambiae (African malaria mosquito).